We begin with the raw amino-acid sequence, 528 residues long: Probable protein phosphatase 2C 51 (528 aa).

A helical transmembrane segment spans residues 8–28; that stretch reads SLLNLGLLIIFFVFFFLVINC. The PPM-type phosphatase domain maps to 71 to 445; that stretch reads RCHTAAIQGR…DNMAAVVVPL (375 aa). 4 residues coordinate Mn(2+): D117, G118, D385, and D436.

This sequence belongs to the PP2C family. The cofactor is Mg(2+). Requires Mn(2+) as cofactor.

The protein localises to the membrane. It catalyses the reaction O-phospho-L-seryl-[protein] + H2O = L-seryl-[protein] + phosphate. The enzyme catalyses O-phospho-L-threonyl-[protein] + H2O = L-threonyl-[protein] + phosphate. This is Probable protein phosphatase 2C 51 from Arabidopsis thaliana (Mouse-ear cress).